We begin with the raw amino-acid sequence, 517 residues long: Ribose import ATP-binding protein RbsA 1 (517 aa).

ABC transporter domains lie at 11–251 and 263–507; these read LEMR…VGRD and YDPG…ALAT. Position 43–50 (43–50) interacts with ATP; the sequence is GENGAGKS.

Belongs to the ABC transporter superfamily. Ribose importer (TC 3.A.1.2.1) family. As to quaternary structure, the complex is composed of an ATP-binding protein (RbsA), two transmembrane proteins (RbsC) and a solute-binding protein (RbsB).

It localises to the cell inner membrane. It catalyses the reaction D-ribose(out) + ATP + H2O = D-ribose(in) + ADP + phosphate + H(+). Part of the ABC transporter complex RbsABC involved in ribose import. Responsible for energy coupling to the transport system. The protein is Ribose import ATP-binding protein RbsA 1 of Burkholderia ambifaria (strain ATCC BAA-244 / DSM 16087 / CCUG 44356 / LMG 19182 / AMMD) (Burkholderia cepacia (strain AMMD)).